A 450-amino-acid polypeptide reads, in one-letter code: Phosphoglucosamine mutase (450 aa).

Residue Ser-101 is the Phosphoserine intermediate of the active site. 4 residues coordinate Mg(2+): Ser-101, Asp-241, Asp-243, and Asp-245. Position 101 is a phosphoserine (Ser-101).

Belongs to the phosphohexose mutase family. Requires Mg(2+) as cofactor. In terms of processing, activated by phosphorylation.

It carries out the reaction alpha-D-glucosamine 1-phosphate = D-glucosamine 6-phosphate. In terms of biological role, catalyzes the conversion of glucosamine-6-phosphate to glucosamine-1-phosphate. This Listeria monocytogenes serotype 4b (strain F2365) protein is Phosphoglucosamine mutase.